The sequence spans 95 residues: Small ribosomal subunit protein uS14 (95 aa).

It belongs to the universal ribosomal protein uS14 family. In terms of assembly, part of the 30S ribosomal subunit. Contacts proteins S3 and S10.

Its function is as follows. Binds 16S rRNA, required for the assembly of 30S particles and may also be responsible for determining the conformation of the 16S rRNA at the A site. The polypeptide is Small ribosomal subunit protein uS14 (Fusobacterium nucleatum subsp. nucleatum (strain ATCC 25586 / DSM 15643 / BCRC 10681 / CIP 101130 / JCM 8532 / KCTC 2640 / LMG 13131 / VPI 4355)).